A 361-amino-acid polypeptide reads, in one-letter code: D-alanine--D-alanine ligase (361 aa).

The ATP-grasp domain maps to 134–344 (KILAQRAGVP…YTDLITKLID (211 aa)). 169 to 224 (ASQLGSDLFVKPSNQGSSVGVSHVTNEKEYKVALAEAFKYDDKVLVEETVHGTEVE) is an ATP binding site. Mg(2+)-binding residues include D297, E311, and N313.

Belongs to the D-alanine--D-alanine ligase family. Mg(2+) serves as cofactor. Requires Mn(2+) as cofactor.

Its subcellular location is the cytoplasm. The catalysed reaction is 2 D-alanine + ATP = D-alanyl-D-alanine + ADP + phosphate + H(+). It participates in cell wall biogenesis; peptidoglycan biosynthesis. Cell wall formation. The sequence is that of D-alanine--D-alanine ligase from Lactobacillus gasseri (strain ATCC 33323 / DSM 20243 / BCRC 14619 / CIP 102991 / JCM 1131 / KCTC 3163 / NCIMB 11718 / NCTC 13722 / AM63).